Consider the following 215-residue polypeptide: Cytochrome b6 (215 aa).

Residues 32-52 traverse the membrane as a helical segment; that stretch reads IFYCFGGLVLTCFLIQVATGF. C35 is a heme c binding site. H86 and H100 together coordinate heme b. 3 helical membrane-spanning segments follow: residues 90 to 110, 116 to 136, and 186 to 206; these read ASMM…TGGF, LTWV…VTGY, and AHTF…FLMI. The heme b site is built by H187 and H202.

Belongs to the cytochrome b family. PetB subfamily. As to quaternary structure, the 4 large subunits of the cytochrome b6-f complex are cytochrome b6, subunit IV (17 kDa polypeptide, PetD), cytochrome f and the Rieske protein, while the 4 small subunits are PetG, PetL, PetM and PetN. The complex functions as a dimer. It depends on heme b as a cofactor. The cofactor is heme c.

The protein resides in the plastid. Its subcellular location is the chloroplast thylakoid membrane. Its function is as follows. Component of the cytochrome b6-f complex, which mediates electron transfer between photosystem II (PSII) and photosystem I (PSI), cyclic electron flow around PSI, and state transitions. The sequence is that of Cytochrome b6 from Phaeodactylum tricornutum (strain CCAP 1055/1).